We begin with the raw amino-acid sequence, 195 residues long: Large ribosomal subunit protein uL5 (195 aa).

The protein belongs to the universal ribosomal protein uL5 family. Part of the 50S ribosomal subunit; part of the 5S rRNA/L5/L18/L25 subcomplex. Contacts the 5S rRNA and the P site tRNA. Forms a bridge to the 30S subunit in the 70S ribosome.

Functionally, this is one of the proteins that bind and probably mediate the attachment of the 5S RNA into the large ribosomal subunit, where it forms part of the central protuberance. In the 70S ribosome it contacts protein S13 of the 30S subunit (bridge B1b), connecting the 2 subunits; this bridge is implicated in subunit movement. Contacts the P site tRNA; the 5S rRNA and some of its associated proteins might help stabilize positioning of ribosome-bound tRNAs. This chain is Large ribosomal subunit protein uL5, found in Chlorobium phaeobacteroides (strain DSM 266 / SMG 266 / 2430).